The primary structure comprises 173 residues: Lens fiber membrane intrinsic protein (173 aa).

Residues 1-3 (MYS) are Cytoplasmic-facing. The helical transmembrane segment at 4 to 24 (FMGGGLFCAWVGTILLVVAMA) threads the bilayer. Over 25 to 66 (TDHWMQYRLSGSFAHQGLWRYCLGNKCYLQTDSIAYWNATRA) the chain is Extracellular. 2 C-linked (Man) tryptophan glycosylation sites follow: W43 and W61. N62 is a glycosylation site (N-linked (GlcNAc...) asparagine). The helical transmembrane segment at 67 to 87 (FMILSALCAISGIIMGIMAFA) threads the bilayer. Residues 88 to 98 (HQPTFSRISRP) lie on the Cytoplasmic side of the membrane. A helical membrane pass occupies residues 99–119 (FSAGIMFFSSTLFVVLALAIY). Residues 120-140 (TGVTVSFLGRRFGDWRFSWSY) are Extracellular-facing. The helical transmembrane segment at 141–161 (ILGWVAVLMTFFAGIFYMCAY) threads the bilayer. Residues 162–173 (RVHECRRLSTPR) lie on the Cytoplasmic side of the membrane. Phosphoserine is present on S170. A Phosphothreonine modification is found at T171.

The protein belongs to the PMP-22/EMP/MP20 family. Seems to be associated with itself or another lens membrane component via disulfide bonds. Eye lens specific.

It localises to the membrane. Functionally, present in the thicker 16-17 nm junctions of mammalian lens fiber cells, where it may contribute to cell junctional organization. Acts as a receptor for calmodulin. May play an important role in both lens development and cataractogenesis. In Homo sapiens (Human), this protein is Lens fiber membrane intrinsic protein (LIM2).